A 145-amino-acid chain; its full sequence is Basic phospholipase A2 beta-bungarotoxin A2 chain (145 aa).

An N-terminal signal peptide occupies residues Met-1–Ala-17. Positions Ala-18–Leu-25 are excised as a propeptide. Disulfide bonds link Cys-52-Cys-144, Cys-54-Cys-70, Cys-69-Cys-125, Cys-76-Cys-118, Cys-86-Cys-111, and Cys-104-Cys-116. Positions 53, 55, and 57 each coordinate Ca(2+). His-73 is an active-site residue. Asp-74 is a binding site for Ca(2+). The active site involves Asp-119.

It belongs to the phospholipase A2 family. Group I subfamily. D49 sub-subfamily. In terms of assembly, heterodimer; disulfide-linked. The A chains have phospholipase A2 activity and the B chains show homology with the basic protease inhibitors. The A2 chain is found in beta-3 and beta-4 bungarotoxins. The cofactor is Ca(2+). In terms of tissue distribution, expressed by the venom gland.

It localises to the secreted. It carries out the reaction a 1,2-diacyl-sn-glycero-3-phosphocholine + H2O = a 1-acyl-sn-glycero-3-phosphocholine + a fatty acid + H(+). Snake venom phospholipase A2 (PLA2) that inhibits neuromuscular transmission by blocking acetylcholine release from the nerve termini. PLA2 catalyzes the calcium-dependent hydrolysis of the 2-acyl groups in 3-sn-phosphoglycerides. The chain is Basic phospholipase A2 beta-bungarotoxin A2 chain from Bungarus multicinctus (Many-banded krait).